A 707-amino-acid chain; its full sequence is Ribosomal RNA large subunit methyltransferase K/L (707 aa).

In terms of domain architecture, THUMP spans Val-44–Leu-155.

This sequence belongs to the methyltransferase superfamily. RlmKL family.

Its subcellular location is the cytoplasm. The enzyme catalyses guanosine(2445) in 23S rRNA + S-adenosyl-L-methionine = N(2)-methylguanosine(2445) in 23S rRNA + S-adenosyl-L-homocysteine + H(+). The catalysed reaction is guanosine(2069) in 23S rRNA + S-adenosyl-L-methionine = N(2)-methylguanosine(2069) in 23S rRNA + S-adenosyl-L-homocysteine + H(+). Specifically methylates the guanine in position 2445 (m2G2445) and the guanine in position 2069 (m7G2069) of 23S rRNA. In Legionella pneumophila subsp. pneumophila (strain Philadelphia 1 / ATCC 33152 / DSM 7513), this protein is Ribosomal RNA large subunit methyltransferase K/L.